Here is a 903-residue protein sequence, read N- to C-terminus: HTH-type transcriptional regulator MalT (903 aa).

39–46 contacts ATP; the sequence is CPAGYGKT. An HTH luxR-type domain is found at 832 to 897; the sequence is ELIRTSPLTQ…DAVQQAQRLL (66 aa). A DNA-binding region (H-T-H motif) is located at residues 856 to 875; it reads NDQIAGELEVAATTIKTHIR.

It belongs to the MalT family. As to quaternary structure, monomer in solution. Oligomerizes to an active state in the presence of the positive effectors ATP and maltotriose.

With respect to regulation, activated by ATP and maltotriose, which are both required for DNA binding. Positively regulates the transcription of the maltose regulon whose gene products are responsible for uptake and catabolism of malto-oligosaccharides. Specifically binds to the promoter region of its target genes, recognizing a short DNA motif called the MalT box. The polypeptide is HTH-type transcriptional regulator MalT (Yersinia enterocolitica serotype O:8 / biotype 1B (strain NCTC 13174 / 8081)).